The following is a 420-amino-acid chain: Glucose-1-phosphate adenylyltransferase (420 aa).

Residues Tyr107, Gly172, 187–188 (EK), and Ser205 contribute to the alpha-D-glucose 1-phosphate site.

It belongs to the bacterial/plant glucose-1-phosphate adenylyltransferase family. As to quaternary structure, homotetramer.

It carries out the reaction alpha-D-glucose 1-phosphate + ATP + H(+) = ADP-alpha-D-glucose + diphosphate. Its pathway is glycan biosynthesis; glycogen biosynthesis. Functionally, involved in the biosynthesis of ADP-glucose, a building block required for the elongation reactions to produce glycogen. Catalyzes the reaction between ATP and alpha-D-glucose 1-phosphate (G1P) to produce pyrophosphate and ADP-Glc. This Rhizobium johnstonii (strain DSM 114642 / LMG 32736 / 3841) (Rhizobium leguminosarum bv. viciae) protein is Glucose-1-phosphate adenylyltransferase.